Reading from the N-terminus, the 97-residue chain is MICOS complex subunit MIC12 (97 aa).

Residues 7 to 24 (LTSITAVSSTLAASYYFY) traverse the membrane as a helical segment.

The protein belongs to the MICOS complex subunit Mic12 family. Component of the mitochondrial contact site and cristae organizing system (MICOS) complex.

The protein resides in the mitochondrion inner membrane. In terms of biological role, component of the MICOS complex, a large protein complex of the mitochondrial inner membrane that plays crucial roles in the maintenance of crista junctions, inner membrane architecture, and formation of contact sites to the outer membrane. This is MICOS complex subunit MIC12 (AIM5) from Zygosaccharomyces rouxii (strain ATCC 2623 / CBS 732 / NBRC 1130 / NCYC 568 / NRRL Y-229).